We begin with the raw amino-acid sequence, 117 residues long: Ribosome-binding factor A (117 aa).

Belongs to the RbfA family. As to quaternary structure, monomer. Binds 30S ribosomal subunits, but not 50S ribosomal subunits or 70S ribosomes.

The protein resides in the cytoplasm. Its function is as follows. One of several proteins that assist in the late maturation steps of the functional core of the 30S ribosomal subunit. Associates with free 30S ribosomal subunits (but not with 30S subunits that are part of 70S ribosomes or polysomes). Required for efficient processing of 16S rRNA. May interact with the 5'-terminal helix region of 16S rRNA. This Leptospira borgpetersenii serovar Hardjo-bovis (strain JB197) protein is Ribosome-binding factor A.